The sequence spans 512 residues: Cytochrome P450 monooxygenase cheE (512 aa).

The helical transmembrane segment at 5–27 (YFAAESSWSPYVILVLALAAMVA) threads the bilayer. N-linked (GlcNAc...) asparagine glycosylation is found at N53, N124, and N168. Residue C455 coordinates heme. 2 N-linked (GlcNAc...) asparagine glycosylation sites follow: N499 and N508.

Belongs to the cytochrome P450 family. Heme serves as cofactor.

It is found in the membrane. It participates in secondary metabolite biosynthesis. Functionally, cytochrome P450 monooxygenase; part of the gene cluster that mediates the biosynthesis of chaetoglobosin A which has a unique inhibitory activity against actin polymerization in mammalian cells. Chaetoglobosin A and its intermediates are involved in the morphological differentiation of C.globosum. The first step of the pathway is the synthesis of prochaetoglobosin I via condensation of one acetyl-CoA, 8 malonyl-CoA, and a L-tryptophan molecule by the PKS-NRPS hybrid synthetase cheA, followed by reduction of backbone double bond to install desired geometry by the enoyl reductase cheB. Further multiple oxidation steps performed by the cytochrome P450 monooxygenases cheE and cheG, as well as by the FAD-linked oxidoreductase cheF, lead to the formation of chaetoglobosin A. Depending on the order of action of these reductases, distinct intermediates can be identified. Within the pathway, the cytochrome P450 monooxygenase cheE catalyzes a stereospecific epoxidation on prochaetoglobosin I, cytoglobosin D, and chaetoglobosin J intermediates. The FAD-linked oxidoreductase cheF performs dehydrogenation of the C-20 hydroxyl groups in the 20-dihyrochaetoglobosin A and cytoglobosin D intermediates. Finally, the cytochrome P450 monooxygenase cheG can catalyze the stereospecific dihydroxylation of prochaetoglobosin I and prochaetoglobosin IV at C-19 and C-20, respectively. The Diels-Alderase cheD may play a role in the post-PKS-NRPS biosynthetic steps catalyzing Diels-Alder cyclization. The chain is Cytochrome P450 monooxygenase cheE from Chaetomium globosum (strain ATCC 6205 / CBS 148.51 / DSM 1962 / NBRC 6347 / NRRL 1970) (Soil fungus).